The chain runs to 327 residues: Aspartate carbamoyltransferase catalytic subunit (327 aa).

Carbamoyl phosphate-binding residues include arginine 73 and threonine 74. Lysine 101 is a binding site for L-aspartate. Carbamoyl phosphate contacts are provided by arginine 123, histidine 153, and glutamine 156. L-aspartate contacts are provided by arginine 186 and arginine 241. The carbamoyl phosphate site is built by glycine 282 and proline 283.

The protein belongs to the aspartate/ornithine carbamoyltransferase superfamily. ATCase family. In terms of assembly, heterododecamer (2C3:3R2) of six catalytic PyrB chains organized as two trimers (C3), and six regulatory PyrI chains organized as three dimers (R2).

It catalyses the reaction carbamoyl phosphate + L-aspartate = N-carbamoyl-L-aspartate + phosphate + H(+). Its pathway is pyrimidine metabolism; UMP biosynthesis via de novo pathway; (S)-dihydroorotate from bicarbonate: step 2/3. In terms of biological role, catalyzes the condensation of carbamoyl phosphate and aspartate to form carbamoyl aspartate and inorganic phosphate, the committed step in the de novo pyrimidine nucleotide biosynthesis pathway. The polypeptide is Aspartate carbamoyltransferase catalytic subunit (Acidithiobacillus ferrooxidans (strain ATCC 23270 / DSM 14882 / CIP 104768 / NCIMB 8455) (Ferrobacillus ferrooxidans (strain ATCC 23270))).